The sequence spans 125 residues: Small ribosomal subunit protein uS13 (125 aa).

Residues 95 to 125 (GLPLRGQRTKTNARTRKGKRKTVANKKIASK) are disordered.

Belongs to the universal ribosomal protein uS13 family. As to quaternary structure, part of the 30S ribosomal subunit. Forms a loose heterodimer with protein S19. Forms two bridges to the 50S subunit in the 70S ribosome.

Its function is as follows. Located at the top of the head of the 30S subunit, it contacts several helices of the 16S rRNA. In the 70S ribosome it contacts the 23S rRNA (bridge B1a) and protein L5 of the 50S subunit (bridge B1b), connecting the 2 subunits; these bridges are implicated in subunit movement. Contacts the tRNAs in the A and P-sites. This Borreliella burgdorferi (strain ATCC 35210 / DSM 4680 / CIP 102532 / B31) (Borrelia burgdorferi) protein is Small ribosomal subunit protein uS13.